Reading from the N-terminus, the 636-residue chain is 1,4-alpha-glucan branching enzyme GlgB (636 aa).

Catalysis depends on aspartate 309, which acts as the Nucleophile. The active-site Proton donor is glutamate 362.

Belongs to the glycosyl hydrolase 13 family. GlgB subfamily. As to quaternary structure, monomer.

It carries out the reaction Transfers a segment of a (1-&gt;4)-alpha-D-glucan chain to a primary hydroxy group in a similar glucan chain.. It participates in glycan biosynthesis; glycogen biosynthesis. Functionally, catalyzes the formation of the alpha-1,6-glucosidic linkages in glycogen by scission of a 1,4-alpha-linked oligosaccharide from growing alpha-1,4-glucan chains and the subsequent attachment of the oligosaccharide to the alpha-1,6 position. The chain is 1,4-alpha-glucan branching enzyme GlgB from Aromatoleum aromaticum (strain DSM 19018 / LMG 30748 / EbN1) (Azoarcus sp. (strain EbN1)).